The following is a 256-amino-acid chain: Lysosomal membrane ascorbate-dependent ferrireductase CYB561A3 (256 aa).

Over 1-3 (MAS) the chain is Cytoplasmic. A helical transmembrane segment spans residues 4-24 (GWFYMSCMVLGSLGSMCILFT). Residues 12–219 (VLGSLGSMCI…FGLLVLYILL (208 aa)) enclose the Cytochrome b561 domain. Over 25 to 40 (TYWMQYWRGGFAWDGT) the chain is Lumenal. A helical membrane pass occupies residues 41–61 (VLMFNWHPVLMVSGMVVLYGA). Residues His-47 and Arg-67 each coordinate heme b. The Cytoplasmic segment spans residues 62–83 (ASLVYRLPASWVGPKLPWKVLH). Lys-76 and Lys-80 together coordinate L-ascorbate. Residue His-83 coordinates heme b. The helical transmembrane segment at 84–104 (AALHLLAFTVTVVGLTAVFGF) threads the bilayer. Over 105 to 119 (HNHSKITHLYSLHSW) the chain is Lumenal. Asn-106 carries N-linked (GlcNAc...) asparagine glycosylation. Heme b contacts are provided by residues 112–115 (HLYS) and His-117. A helical membrane pass occupies residues 120–140 (LGITTVALFACQWFLGFAVFL). The Cytoplasmic portion of the chain corresponds to 141 to 154 (LPWASQWLRSLLKP). L-ascorbate is bound at residue Arg-149. A helical membrane pass occupies residues 155-175 (VHVFFGACILSLSIASVISGI). Heme b contacts are provided by His-156 and Glu-177. Topologically, residues 176–202 (NEKLFFVLKNATRPYSSLPGEAVFANS) are lumenal. Residues 203–223 (TGILVVSFGLLVLYILLASSW) traverse the membrane as a helical segment. Residue Arg-224 coordinates heme b. The Cytoplasmic portion of the chain corresponds to 224 to 256 (RRPDPGALTDRQVWLLVSHYRWDKAKKACFAPC).

In terms of assembly, homodimer. The cofactor is heme b. In terms of processing, N-glycosylated.

The protein resides in the late endosome membrane. The protein localises to the lysosome membrane. The enzyme catalyses Fe(3+)(out) + L-ascorbate(in) = monodehydro-L-ascorbate radical(in) + Fe(2+)(out) + H(+). In terms of biological role, transmembrane reductase that uses ascorbate as an electron donor in the cytoplasm and transfers electrons across membranes to reduce iron cations Fe(3+) into Fe(2+) in the lumen of the late endosome and lysosome. Reduced iron can then be extruded from the late endosome and lysosome to the cytoplasm by divalent metal-specific transporters. It is therefore most probably involved in endosomal and lysosomal cellular iron homeostasis. The chain is Lysosomal membrane ascorbate-dependent ferrireductase CYB561A3 from Rattus norvegicus (Rat).